Reading from the N-terminus, the 248-residue chain is Ubiquinone biosynthesis O-methyltransferase (248 aa).

The S-adenosyl-L-methionine site is built by R41, G72, D93, and M136.

Belongs to the methyltransferase superfamily. UbiG/COQ3 family.

It carries out the reaction a 3-demethylubiquinol + S-adenosyl-L-methionine = a ubiquinol + S-adenosyl-L-homocysteine + H(+). The enzyme catalyses a 3-(all-trans-polyprenyl)benzene-1,2-diol + S-adenosyl-L-methionine = a 2-methoxy-6-(all-trans-polyprenyl)phenol + S-adenosyl-L-homocysteine + H(+). The protein operates within cofactor biosynthesis; ubiquinone biosynthesis. Its function is as follows. O-methyltransferase that catalyzes the 2 O-methylation steps in the ubiquinone biosynthetic pathway. The sequence is that of Ubiquinone biosynthesis O-methyltransferase from Brucella abortus (strain 2308).